Here is a 498-residue protein sequence, read N- to C-terminus: Glycerol kinase (498 aa).

Threonine 11 contributes to the ADP binding site. Residues threonine 11, serine 12, and serine 13 each contribute to the ATP site. Threonine 11 contributes to the sn-glycerol 3-phosphate binding site. An ADP-binding site is contributed by arginine 15. Positions 81, 82, 133, and 242 each coordinate sn-glycerol 3-phosphate. Positions 81, 82, 133, 242, and 243 each coordinate glycerol. Residues threonine 264 and glycine 307 each contribute to the ADP site. Threonine 264, glycine 307, glutamine 311, and glycine 408 together coordinate ATP. ADP-binding residues include glycine 408 and asparagine 412.

Belongs to the FGGY kinase family.

It carries out the reaction glycerol + ATP = sn-glycerol 3-phosphate + ADP + H(+). The protein operates within polyol metabolism; glycerol degradation via glycerol kinase pathway; sn-glycerol 3-phosphate from glycerol: step 1/1. Inhibited by fructose 1,6-bisphosphate (FBP). Key enzyme in the regulation of glycerol uptake and metabolism. Catalyzes the phosphorylation of glycerol to yield sn-glycerol 3-phosphate. In Ralstonia nicotianae (strain ATCC BAA-1114 / GMI1000) (Ralstonia solanacearum), this protein is Glycerol kinase.